We begin with the raw amino-acid sequence, 574 residues long: Putative dehydratase IlvD1 (574 aa).

Residues cysteine 124 and cysteine 197 each contribute to the [4Fe-4S] cluster site.

The protein belongs to the IlvD/Edd family. The cofactor is [4Fe-4S] cluster.

Involved in the degradation of galactose via the DeLey-Doudoroff pathway. The sequence is that of Putative dehydratase IlvD1 (ilvD1) from Rhizobium meliloti (strain 1021) (Ensifer meliloti).